The chain runs to 86 residues: Large ribosomal subunit protein bL27 (86 aa).

Belongs to the bacterial ribosomal protein bL27 family.

In Cupriavidus metallidurans (strain ATCC 43123 / DSM 2839 / NBRC 102507 / CH34) (Ralstonia metallidurans), this protein is Large ribosomal subunit protein bL27.